Here is a 680-residue protein sequence, read N- to C-terminus: Zinc finger protein 263 (680 aa).

Lysine 19 is covalently cross-linked (Glycyl lysine isopeptide (Lys-Gly) (interchain with G-Cter in SUMO2)). Residues 43-125 (HLRFRRFRFQ…TLVERMQKEL (83 aa)) form the SCAN box domain. The tract at residues 147–191 (LPLETAGESPSFKLEPMETERSPGPRLQELLDPSPQRDSQAVKER) is disordered. A Glycyl lysine isopeptide (Lys-Gly) (interchain with G-Cter in SUMO2) cross-link involves residue lysine 159. Phosphoserine is present on residues serine 168 and serine 180. Glycyl lysine isopeptide (Lys-Gly) (interchain with G-Cter in SUMO2) cross-links involve residues lysine 286, lysine 300, and lysine 376. C2H2-type zinc fingers lie at residues 378–400 (HLCA…QRIH), 434–456 (HKCL…QRTH), 462–484 (FQCN…QRTH), 490–512 (YKCP…QRIH), and 518–540 (YRCS…ERTH). Residues lysine 570 and lysine 579 each participate in a glycyl lysine isopeptide (Lys-Gly) (interchain with G-Cter in SUMO2) cross-link. C2H2-type zinc fingers lie at residues 572-594 (FECS…QRTH), 600-622 (YKCI…QRIH), 628-650 (YTCH…LRTH), and 656-678 (YKCS…QRTH).

Belongs to the krueppel C2H2-type zinc-finger protein family. Interacts with a number of proteins involved in chromatin modification and transcriptional corepression including DNMT1, DNMT3A, HDAC2, PHF8, TRIM28/KAP1, SETDB1, EZH2, UHRF1, CBX3/HP1-gamma, and CBX5/HP1-alpha; recruits these proteins to the SIX3 promoter region, leading to SIX3 transcriptional repression. Interacts with MAPK3/ERK1 and MAPK1/ERK2. In terms of processing, ubiquitinated, leading to proteasomal degradation. As to expression, expressed in Purkinje cells in the brain (at protein level).

Its subcellular location is the nucleus. Functionally, transcription factor that binds to the consensus sequence 5'-TCCTCCC-3' and acts as a transcriptional repressor. Binds to the promoter region of SIX3 and recruits other proteins involved in chromatin modification and transcriptional corepression, resulting in methylation of the promoter and transcriptional repression. Acts as a transcriptional repressor of HS3ST1 and HS3ST3A1 via binding to gene promoter regions. The protein is Zinc finger protein 263 of Mus musculus (Mouse).